Reading from the N-terminus, the 241-residue chain is GTP cyclohydrolase III (241 aa).

It belongs to the archaeal-type GTP cyclohydrolase family.

It catalyses the reaction GTP + 3 H2O = 2-amino-5-formylamino-6-(5-phospho-D-ribosylamino)pyrimidin-4(3H)-one + 2 phosphate + 2 H(+). Functionally, catalyzes the formation of 2-amino-5-formylamino-6-ribofuranosylamino-4(3H)-pyrimidinone ribonucleotide monophosphate and inorganic phosphate from GTP. Also has an independent pyrophosphate phosphohydrolase activity. The chain is GTP cyclohydrolase III from Aeropyrum pernix (strain ATCC 700893 / DSM 11879 / JCM 9820 / NBRC 100138 / K1).